Reading from the N-terminus, the 478-residue chain is Ankyrin repeat and BTB/POZ domain-containing protein 1 (478 aa).

ANK repeat units follow at residues 1 to 31 and 35 to 64; these read MDTSDLFASCRKGDVGRVRYLLEQRDVEVNV and WDSTPLYYACLCGHEELVRYLLANGARCEA. 2 consecutive BTB domains span residues 115–182 and 272–346; these read SDVV…DIGV and PDIC…ELPP. The stretch at 451-477 forms a coiled coil; the sequence is VQTYSAIEEAQQRLRALEDLLVSIGLD.

The protein localises to the cytoplasm. Functionally, may act as a mediator of the PTEN growth-suppressive signaling pathway. May play a role in developmental processes. This chain is Ankyrin repeat and BTB/POZ domain-containing protein 1, found in Mus musculus (Mouse).